Here is a 349-residue protein sequence, read N- to C-terminus: Ornithine carbamoyltransferase, mitochondrial (349 aa).

Carbamoyl phosphate is bound by residues Ser73 to Thr76, Arg124, His151, and Gln154. L-ornithine contacts are provided by Asn195, Asp261, Ser265, and Met266. Cys303 acts as the Proton acceptor in catalysis. Carbamoyl phosphate is bound by residues Cys303 to Leu304 and Arg330.

It belongs to the aspartate/ornithine carbamoyltransferase superfamily. OTCase family. As to quaternary structure, homotrimer.

It is found in the mitochondrion matrix. It carries out the reaction carbamoyl phosphate + L-ornithine = L-citrulline + phosphate + H(+). The protein operates within amino-acid biosynthesis; L-arginine biosynthesis; L-arginine from L-ornithine and carbamoyl phosphate: step 1/3. This Coccidioides immitis (strain RS) (Valley fever fungus) protein is Ornithine carbamoyltransferase, mitochondrial.